Reading from the N-terminus, the 459-residue chain is Cysteine--tRNA ligase (459 aa).

A Zn(2+)-binding site is contributed by Cys-28. The short motif at 30–40 (VTVYDLCHIGH) is the 'HIGH' region element. Positions 209, 234, and 238 each coordinate Zn(2+). A 'KMSKS' region motif is present at residues 266–270 (KMSKS). Residue Lys-269 participates in ATP binding.

The protein belongs to the class-I aminoacyl-tRNA synthetase family. As to quaternary structure, monomer. The cofactor is Zn(2+).

Its subcellular location is the cytoplasm. It catalyses the reaction tRNA(Cys) + L-cysteine + ATP = L-cysteinyl-tRNA(Cys) + AMP + diphosphate. In Haemophilus influenzae (strain 86-028NP), this protein is Cysteine--tRNA ligase.